The chain runs to 396 residues: MKVLVLNAGSSSLKCQYFIDEESIASVTIERIGEKESYTLLTYANEKREHTSTVKNHHDAIDTLFSLLKESHIITDVTELNAVGHRIVHGGPHFSRPTLINTEVIEQIRSLIPLAPLHNPSNLEGIEVIAKVYPALKQVAVFDTAFHQTMPEYAARYPLPYDLYEEAHVRRYGFHGTSHAYVAKEAAKILQQPLETLNLITLHLGNGASATAIKKGRSIDTSMGMTPLEGLMMGSRSGDIDPAIIPYLVRTQKIDVETIDSMLNKESGLKGVCGNNDMREIIDKMDEGDEKSRLALEMYVYRIKKYIGAYSATLGHVDALVFTGGIGEHAALVREMVCEGMEYTFGIILEKKKNDSAKQEASAIHSRESRTDILVIPTDEELEIVRQTEVIVSRLS.

Asn-7 contributes to the Mg(2+) binding site. Residue Lys-14 coordinates ATP. Position 86 (Arg-86) interacts with substrate. Asp-143 acts as the Proton donor/acceptor in catalysis. ATP-binding positions include 203–207, 277–279, and 325–329; these read HLGNG, DMR, and GIGEH. Glu-380 provides a ligand contact to Mg(2+).

This sequence belongs to the acetokinase family. Homodimer. Requires Mg(2+) as cofactor. It depends on Mn(2+) as a cofactor.

The protein resides in the cytoplasm. It carries out the reaction acetate + ATP = acetyl phosphate + ADP. Its pathway is metabolic intermediate biosynthesis; acetyl-CoA biosynthesis; acetyl-CoA from acetate: step 1/2. Functionally, catalyzes the formation of acetyl phosphate from acetate and ATP. Can also catalyze the reverse reaction. The chain is Acetate kinase from Sulfurovum sp. (strain NBC37-1).